Reading from the N-terminus, the 548-residue chain is Probable malate:quinone oxidoreductase (548 aa).

The interval 521-548 (DKPQAADSTPKPQLKPKPVQKEVADIAL) is disordered. The segment covering 539–548 (VQKEVADIAL) has biased composition (basic and acidic residues).

The protein belongs to the MQO family. FAD serves as cofactor.

It catalyses the reaction (S)-malate + a quinone = a quinol + oxaloacetate. It participates in carbohydrate metabolism; tricarboxylic acid cycle; oxaloacetate from (S)-malate (quinone route): step 1/1. This Escherichia coli (strain ATCC 8739 / DSM 1576 / NBRC 3972 / NCIMB 8545 / WDCM 00012 / Crooks) protein is Probable malate:quinone oxidoreductase.